A 435-amino-acid polypeptide reads, in one-letter code: Citrate synthase (435 aa).

Catalysis depends on residues histidine 311 and aspartate 370.

It belongs to the citrate synthase family.

The catalysed reaction is oxaloacetate + acetyl-CoA + H2O = citrate + CoA + H(+). It functions in the pathway carbohydrate metabolism; tricarboxylic acid cycle; isocitrate from oxaloacetate: step 1/2. This Rickettsia slovaca (strain 13-B) protein is Citrate synthase (gltA).